Here is a 428-residue protein sequence, read N- to C-terminus: UDP-N-acetylglucosamine 1-carboxyvinyltransferase (428 aa).

Residue 25–26 (KN) coordinates phosphoenolpyruvate. Arginine 102 contacts UDP-N-acetyl-alpha-D-glucosamine. Catalysis depends on cysteine 126, which acts as the Proton donor. At cysteine 126 the chain carries 2-(S-cysteinyl)pyruvic acid O-phosphothioketal. UDP-N-acetyl-alpha-D-glucosamine contacts are provided by aspartate 316 and valine 338.

Belongs to the EPSP synthase family. MurA subfamily.

The protein localises to the cytoplasm. The catalysed reaction is phosphoenolpyruvate + UDP-N-acetyl-alpha-D-glucosamine = UDP-N-acetyl-3-O-(1-carboxyvinyl)-alpha-D-glucosamine + phosphate. Its pathway is cell wall biogenesis; peptidoglycan biosynthesis. Functionally, cell wall formation. Adds enolpyruvyl to UDP-N-acetylglucosamine. The protein is UDP-N-acetylglucosamine 1-carboxyvinyltransferase of Anaplasma marginale (strain St. Maries).